Reading from the N-terminus, the 110-residue chain is Cytochrome c6 (110 aa).

The first 25 residues, 1–25 (MKKLVSSVILALILFGFSWVSPAFA), serve as a signal peptide directing secretion. 4 residues coordinate heme c: cysteine 39, cysteine 42, histidine 43, and methionine 83.

It belongs to the cytochrome c family. PetJ subfamily. Monomer. In terms of processing, binds 1 heme c group covalently per subunit.

The protein localises to the cellular thylakoid lumen. In terms of biological role, functions as an electron carrier between membrane-bound cytochrome b6-f and photosystem I in oxygenic photosynthesis. This Gloeothece citriformis (strain PCC 7424) (Cyanothece sp. (strain PCC 7424)) protein is Cytochrome c6.